Consider the following 2731-residue polypeptide: Putative mediator of RNA polymerase II transcription subunit 12 (2731 aa).

Coiled coils occupy residues 5 to 37 (QQIL…QQQQ), 75 to 108 (HIQQ…QQVH), 141 to 189 (QQIH…QQQQ), and 275 to 304 (IQQL…QQQQ). 2 disordered regions span residues 29-57 (QQQM…HMIH) and 101-145 (QQQQ…QIHQ). Low complexity predominate over residues 310–320 (QPQQQQQQQQP). 4 disordered regions span residues 310–376 (QPQQ…DDKS), 432–451 (TQKS…RPVP), 685–708 (LGHG…QQPQ), and 1251–1341 (RNNN…QQKS). Residues 327 to 337 (QNPSYHSQSQI) are compositionally biased toward polar residues. Residues 347–361 (KKYEIQKPADKKELG) show a composition bias toward basic and acidic residues. Residues 688–701 (GHGHGHGHHSHSHS) show a composition bias toward basic residues. Residues 1251–1268 (RNNNNNNKNKNNNKQSNN) show a composition bias toward low complexity. 2 stretches are compositionally biased toward acidic residues: residues 1275 to 1298 (NGEE…DNDE) and 1305 to 1326 (NDNE…DDQM). Coiled coils occupy residues 1316–1344 (EDED…SNEN) and 1375–1433 (KLKK…DEEL). Disordered stretches follow at residues 1778–1825 (HDDN…NNNG), 1892–1958 (TQSS…NNTT), 2212–2258 (SSSS…NNVK), 2307–2351 (TSSV…QQQQ), 2472–2532 (EIEK…KPQT), and 2705–2731 (HQQI…NNYK). Composition is skewed to low complexity over residues 1783–1824 (ENNN…NNNN), 1892–1909 (TQSS…QSPT), 1916–1958 (NSTN…NNTT), 2212–2250 (SSSS…QQQQ), 2307–2322 (TSSV…STTS), 2337–2351 (QQQT…QQQQ), 2472–2501 (EIEK…HQQL), 2508–2532 (LQQQ…KPQT), and 2705–2720 (HQQI…HQQQ). Residues 2239–2270 (TNQQQQQQQQQQADQKNNVKKKLHELYQKIKS) adopt a coiled-coil conformation. Positions 2336–2363 (LQQQTSQQQQQQQQQQQQQSQQHQQQQQ) form a coiled coil. The stretch at 2523-2662 (QQLQQQKPQT…QQQQQQLQQL (140 aa)) forms a coiled coil. A compositionally biased stretch (polar residues) spans 2721-2731 (KCSTTKYNNYK).

It belongs to the Mediator complex subunit 12 family. Component of the Mediator complex.

It localises to the nucleus. Its function is as follows. Component of the Mediator complex, a coactivator involved in the regulated transcription of nearly all RNA polymerase II-dependent genes. Mediator functions as a bridge to convey information from gene-specific regulatory proteins to the basal RNA polymerase II transcription machinery. Mediator is recruited to promoters by direct interactions with regulatory proteins and serves as a scaffold for the assembly of a functional preinitiation complex with RNA polymerase II and the general transcription factors. This chain is Putative mediator of RNA polymerase II transcription subunit 12 (med12), found in Dictyostelium discoideum (Social amoeba).